We begin with the raw amino-acid sequence, 65 residues long: Myotoxin-1 (65 aa).

Positions 1 to 22 (MKILYLLFAFLFLAFLSEPGNA) are cleaved as a signal peptide. 3 disulfides stabilise this stretch: Cys-26–Cys-58, Cys-33–Cys-52, and Cys-40–Cys-59.

The protein belongs to the crotamine-myotoxin family. In terms of assembly, monomer. Expressed by the venom gland.

It localises to the secreted. Its function is as follows. Cationic peptide that possesses multiple functions. It acts as a cell-penetrating peptide (CPP), and as a potent voltage-gated potassium channel (Kv) inhibitor. It exhibits antimicrobial activities, hind limb paralysis, and severe muscle necrosis by a non-enzymatic mechanism. The chain is Myotoxin-1 from Crotalus durissus terrificus (South American rattlesnake).